The sequence spans 403 residues: Bifunctional enzyme IspD/IspF (403 aa).

The segment at 1–234 is 2-C-methyl-D-erythritol 4-phosphate cytidylyltransferase; it reads MPTSKRTAAI…ARLAAMLGDI (234 aa). A 2-C-methyl-D-erythritol 2,4-cyclodiphosphate synthase region spans residues 235 to 403; the sequence is RTGTGYDVHA…SDQEDKGWST (169 aa). A divalent metal cation-binding residues include aspartate 241 and histidine 243. Residues 241-243 and 267-268 each bind 4-CDP-2-C-methyl-D-erythritol 2-phosphate; these read DVH and HS. Histidine 275 is an a divalent metal cation binding site. Residues 289-291, 365-368, phenylalanine 372, and arginine 375 contribute to the 4-CDP-2-C-methyl-D-erythritol 2-phosphate site; these read DIG and TTSE.

It in the N-terminal section; belongs to the IspD/TarI cytidylyltransferase family. IspD subfamily. The protein in the C-terminal section; belongs to the IspF family. A divalent metal cation serves as cofactor.

It catalyses the reaction 2-C-methyl-D-erythritol 4-phosphate + CTP + H(+) = 4-CDP-2-C-methyl-D-erythritol + diphosphate. It carries out the reaction 4-CDP-2-C-methyl-D-erythritol 2-phosphate = 2-C-methyl-D-erythritol 2,4-cyclic diphosphate + CMP. It participates in isoprenoid biosynthesis; isopentenyl diphosphate biosynthesis via DXP pathway; isopentenyl diphosphate from 1-deoxy-D-xylulose 5-phosphate: step 2/6. It functions in the pathway isoprenoid biosynthesis; isopentenyl diphosphate biosynthesis via DXP pathway; isopentenyl diphosphate from 1-deoxy-D-xylulose 5-phosphate: step 4/6. In terms of biological role, bifunctional enzyme that catalyzes the formation of 4-diphosphocytidyl-2-C-methyl-D-erythritol from CTP and 2-C-methyl-D-erythritol 4-phosphate (MEP) (IspD), and catalyzes the conversion of 4-diphosphocytidyl-2-C-methyl-D-erythritol 2-phosphate (CDP-ME2P) to 2-C-methyl-D-erythritol 2,4-cyclodiphosphate (ME-CPP) with a corresponding release of cytidine 5-monophosphate (CMP) (IspF). This is Bifunctional enzyme IspD/IspF from Nitrobacter hamburgensis (strain DSM 10229 / NCIMB 13809 / X14).